A 233-amino-acid polypeptide reads, in one-letter code: Small heat shock protein hspF (233 aa).

The region spanning 129-233 (IPLFTFFEPL…ILLITVNKFL (105 aa)) is the sHSP domain.

Belongs to the small heat shock protein (HSP20) family.

The polypeptide is Small heat shock protein hspF (hspF-1) (Dictyostelium discoideum (Social amoeba)).